A 95-amino-acid chain; its full sequence is UPF0213 protein PEPE_0875 (95 aa).

Residues 7 to 82 enclose the GIY-YIG domain; it reads NGFYFYVLRC…KQRTRSSKIK (76 aa).

Belongs to the UPF0213 family.

In Pediococcus pentosaceus (strain ATCC 25745 / CCUG 21536 / LMG 10740 / 183-1w), this protein is UPF0213 protein PEPE_0875.